The sequence spans 57 residues: uncharacterized protein (57 aa).

Residues 9 to 45 are a coiled coil; sequence NWQEEIRKIIIERVRREAKKRLLEETRKLRMEMKSSK.

This is an uncharacterized protein from Archaeoglobus fulgidus (strain ATCC 49558 / DSM 4304 / JCM 9628 / NBRC 100126 / VC-16).